Reading from the N-terminus, the 105-residue chain is Large ribosomal subunit protein uL24 (105 aa).

Belongs to the universal ribosomal protein uL24 family. In terms of assembly, part of the 50S ribosomal subunit.

One of two assembly initiator proteins, it binds directly to the 5'-end of the 23S rRNA, where it nucleates assembly of the 50S subunit. In terms of biological role, one of the proteins that surrounds the polypeptide exit tunnel on the outside of the subunit. This is Large ribosomal subunit protein uL24 from Francisella philomiragia subsp. philomiragia (strain ATCC 25017 / CCUG 19701 / FSC 153 / O#319-036).